The sequence spans 480 residues: Alkaline nuclease (480 aa).

This sequence belongs to the herpesviridae alkaline nuclease family. As to quaternary structure, interacts with major DNA-binding protein; this interaction increases the nuclease processivity of the alkaline exonuclease.

It localises to the host nucleus. The protein resides in the host cytoplasm. In terms of biological role, plays a role in processing non linear or branched viral DNA intermediates in order to promote the production of mature packaged unit-length linear progeny viral DNA molecules. Exhibits endonuclease and exonuclease activities and accepts both double-stranded and single-stranded DNA as substrate. Exonuclease digestion of DNA is in the 5'-&gt; 3' direction and the products are 5'-monophosphate nucleosides. Additionally, forms a recombinase with the major DNA-binding protein, which displays strand exchange activity. The protein is Alkaline nuclease (U70) of Homo sapiens (Human).